The chain runs to 108 residues: Nucleoid-associated protein Mmwyl1_2533 (108 aa).

The disordered stretch occupies residues 1 to 22 (MFKGGMGNMMRQAQQMQENMQK). Polar residues predominate over residues 11-22 (RQAQQMQENMQK).

It belongs to the YbaB/EbfC family. Homodimer.

Its subcellular location is the cytoplasm. The protein localises to the nucleoid. In terms of biological role, binds to DNA and alters its conformation. May be involved in regulation of gene expression, nucleoid organization and DNA protection. This is Nucleoid-associated protein Mmwyl1_2533 from Marinomonas sp. (strain MWYL1).